A 224-amino-acid chain; its full sequence is ATP synthase subunit a (224 aa).

A run of 6 helical transmembrane segments spans residues 17–37, 72–92, 99–119, 125–145, 170–190, and 195–215; these read LSLNWLSTFLGLLMIPSIYWL, IFISLFSLILFNNFMGLFPYI, LTLTLSLALPLWLCFMLYGWI, MFAHLVPQGTPAILMPFMVCI, LLLTLLGNTGPSMSYLLVTFL, and IALLVLESAVAMIQSYVFAVL.

It belongs to the ATPase A chain family. As to quaternary structure, F-type ATPases have 2 components, CF(1) - the catalytic core - and CF(0) - the membrane proton channel. CF(1) has five subunits: alpha(3), beta(3), gamma(1), delta(1), epsilon(1). CF(0) has three main subunits: a, b and c.

The protein localises to the mitochondrion inner membrane. Mitochondrial membrane ATP synthase (F(1)F(0) ATP synthase or Complex V) produces ATP from ADP in the presence of a proton gradient across the membrane which is generated by electron transport complexes of the respiratory chain. F-type ATPases consist of two structural domains, F(1) - containing the extramembraneous catalytic core and F(0) - containing the membrane proton channel, linked together by a central stalk and a peripheral stalk. During catalysis, ATP synthesis in the catalytic domain of F(1) is coupled via a rotary mechanism of the central stalk subunits to proton translocation. Key component of the proton channel; it may play a direct role in the translocation of protons across the membrane. The sequence is that of ATP synthase subunit a (mt:ATPase6) from Drosophila simulans (Fruit fly).